Consider the following 443-residue polypeptide: MSNIKTQDVPRVGFVSLGCPKATSDSEHILTRLRAEGYEISGSYDAADLVVVNTCGFIDAAVEESLDAIGEALAENGRVIVTGCLGAKDDVILAAHPQVLAVTGPHATEEVMQAVHRHLPKPHDPFSDLVPPQGIRLTPQHYAYLKISEGCNHRCTFCIIPSMRGDLVSRPIHDVMREAEALADAGVKELLVISQDTSAYGVDVKYRTGFWGGKPVKTRLYDLANALGELGIWIRMHYVYPYPSVDDLIPLMAEGKILPYLDVPFQHASPRILKAMKRPANAENVLERVRKWREICPDLTIRSTFITGFPGETEEDFEQLLQFLEAAQLDRVGAFAYSPVEGAAANDLPDAVPDEVREERRARLMDFQEDISTQRLEAKIGREMTVLVDDVDEEGALARSPGDAPEIDGLVVIPDGEGLAPGDFVRVRITDCDIHDLYAERVV.

The 111-residue stretch at 10 to 120 folds into the MTTase N-terminal domain; the sequence is PRVGFVSLGC…VMQAVHRHLP (111 aa). The [4Fe-4S] cluster site is built by cysteine 19, cysteine 55, cysteine 84, cysteine 151, cysteine 155, and cysteine 158. The Radical SAM core domain maps to 137-375; it reads LTPQHYAYLK…DFQEDISTQR (239 aa). In terms of domain architecture, TRAM spans 377-443; it reads EAKIGREMTV…IHDLYAERVV (67 aa).

Belongs to the methylthiotransferase family. RimO subfamily. It depends on [4Fe-4S] cluster as a cofactor.

It localises to the cytoplasm. The catalysed reaction is L-aspartate(89)-[ribosomal protein uS12]-hydrogen + (sulfur carrier)-SH + AH2 + 2 S-adenosyl-L-methionine = 3-methylsulfanyl-L-aspartate(89)-[ribosomal protein uS12]-hydrogen + (sulfur carrier)-H + 5'-deoxyadenosine + L-methionine + A + S-adenosyl-L-homocysteine + 2 H(+). Functionally, catalyzes the methylthiolation of an aspartic acid residue of ribosomal protein uS12. This chain is Ribosomal protein uS12 methylthiotransferase RimO, found in Azoarcus sp. (strain BH72).